Reading from the N-terminus, the 293-residue chain is F-box only protein 6 (293 aa).

One can recognise an F-box domain in the interval 10–57 (LDSINELPENILLELFTHVPARQLLLNCRLVCSLWRDLIDLMTLWKRK). The region spanning 78–259 (FYFLRSLHRN…VTNSSIVVSP (182 aa)) is the FBA domain. Serine 258 bears the Phosphoserine mark. Residues 261 to 271 (MTRNQASSEAQ) are compositionally biased toward polar residues. A disordered region spans residues 261–285 (MTRNQASSEAQPGQKHGQEEAAQSP). Serine 284 is subject to Phosphoserine.

As to quaternary structure, interacts with VCP. Part of a SCF (SKP1-cullin-F-box) protein ligase complex. Interacts with CHEK1 and CUL1.

Its subcellular location is the cytoplasm. The protein operates within protein modification; protein ubiquitination. In terms of biological role, substrate-recognition component of some SCF (SKP1-CUL1-F-box protein)-type E3 ubiquitin ligase complexes. Involved in endoplasmic reticulum-associated degradation pathway (ERAD) for misfolded lumenal proteins by recognizing and binding sugar chains on unfolded glycoproteins that are retrotranslocated into the cytosol and promoting their ubiquitination and subsequent degradation. Able to recognize and bind denatured glycoproteins, which are modified with not only high-mannose but also complex-type oligosaccharides. Also recognizes sulfated glycans. Also involved in DNA damage response by specifically recognizing activated CHEK1 (phosphorylated on 'Ser-345'), promoting its ubiquitination and degradation. Ubiquitination of CHEK1 is required to ensure that activated CHEK1 does not accumulate as cells progress through S phase, or when replication forks encounter transient impediments during normal DNA replication. In Homo sapiens (Human), this protein is F-box only protein 6 (FBXO6).